The sequence spans 510 residues: MRSRRDNSWVAQKFGGTSIGKFPDKVAEIVKSARLGGDRPAVICSARSSGKKVFGTTSRLLQVYRTLRGIVAITQDPDMQELLFDRLRSIIRDIRDDQVATVQMYILRQDIRDDTIRQITADCQELLDYTSAAKRFNLDINGKAKDKMVSFGEKLSCRLMVAMLRDRDIPAEYVDLSDIVPSNNLDQLRPDFFHEAAAVFGKRVEACNGRVPVITGFFGAVPGSLIDSGIGRGYSDLCAVLVAIGLHAERVQIWKEVDGIFTADPREVPDARCLPSITPSEAAELTFYGSEVIHHLALSLAIQAKPPVSIFVKNVQKPWGQGTVVVPTDGDDTSSWPIDYLDPSDSDSTSSTALPKMPTAVTIKRDITIFNILSNKQSMSHGFFVKVFTILAEHDISVDLISTSEVHVSMAINSSNMDPSQIKNVQCRLAEEGEVNVLPDMAILSLVGAELKNMTGIAGKMFAILGEQDVNIEMISQGASEINISCVIPDKDATRALNMLHDELFTKNAI.

ACT domains lie at 372–440 (ILSN…VLPD) and 446–510 (LVGA…KNAI).

Belongs to the aspartokinase family.

The catalysed reaction is L-aspartate + ATP = 4-phospho-L-aspartate + ADP. The protein operates within mycotoxin biosynthesis. Aspartate kinase; part of the gene cluster that mediates the biosynthesis of fusaric acid, a mycotoxin with low to moderate toxicity to animals and humans, but with high phytotoxic properties. L-aspartate is suggested as fusaric acid amino acid precursor that is activated and further processed to O-acetyl-L-homoserine by cluster enzymes aspartate kinase FUB3 and homoserine O-acetyltransferase FUB5, as well as enzymes of the primary metabolism. The polyketide synthase (PKS) FUB1 generates the triketide trans-2-hexenal which is presumptively released by the hydrolase FUB4 and linked to the NRPS-bound amino acid precursor by NAD(P)-dependent dehydrogenase FUB6. FUB1, FUB4, and the non-canonical NRPS Fub8 may form an enzyme complex. Further processing of the NRPS-bound intermediate might be carried out by FUB6 and the sulfhydrylase FUB7, enabling a spontaneous electrocyclization to close the carbon backbone of fusaric acid. Dihydrofusaric acid is likely to be released via reduction by the thioester reductase (TR) domain of FUB8 whereupon the final oxidation to fusaric acid may (also) be performed by the FMN-dependent dehydrogenase FUB9. The protein is Aspartate kinase FUB3 of Gibberella fujikuroi (strain CBS 195.34 / IMI 58289 / NRRL A-6831) (Bakanae and foot rot disease fungus).